The following is a 425-amino-acid chain: Serine hydroxymethyltransferase (425 aa).

132–134 (GHL) is a binding site for (6S)-5,6,7,8-tetrahydrofolate. An N6-(pyridoxal phosphate)lysine modification is found at lysine 237.

It belongs to the SHMT family. As to quaternary structure, homodimer. Pyridoxal 5'-phosphate serves as cofactor.

The protein localises to the cytoplasm. It carries out the reaction (6R)-5,10-methylene-5,6,7,8-tetrahydrofolate + glycine + H2O = (6S)-5,6,7,8-tetrahydrofolate + L-serine. It participates in one-carbon metabolism; tetrahydrofolate interconversion. Its pathway is amino-acid biosynthesis; glycine biosynthesis; glycine from L-serine: step 1/1. Its function is as follows. Catalyzes the reversible interconversion of serine and glycine with tetrahydrofolate (THF) serving as the one-carbon carrier. This reaction serves as the major source of one-carbon groups required for the biosynthesis of purines, thymidylate, methionine, and other important biomolecules. Also exhibits THF-independent aldolase activity toward beta-hydroxyamino acids, producing glycine and aldehydes, via a retro-aldol mechanism. The chain is Serine hydroxymethyltransferase from Wolbachia sp. subsp. Brugia malayi (strain TRS).